A 28-amino-acid chain; its full sequence is Ornatin-D (28 aa).

The protein belongs to the ornatin family.

It is found in the secreted. Functionally, potent inhibitor of fibrinogen interaction with platelet receptors expressed on glycoprotein IIb-IIIa complex. May prevent blood from clotting during either feeding and/or storage of ingested blood. This is Ornatin-D from Placobdella ornata (Turtle leech).